The following is a 230-amino-acid chain: Dephospho-CoA kinase (230 aa).

Positions 3-206 (LVGLTGGIAS…EPLTWKERLR (204 aa)) constitute a DPCK domain. 8-15 (GGIASGKS) provides a ligand contact to ATP.

This sequence belongs to the CoaE family.

It catalyses the reaction 3'-dephospho-CoA + ATP = ADP + CoA + H(+). It functions in the pathway cofactor biosynthesis; coenzyme A biosynthesis; CoA from (R)-pantothenate: step 5/5. In terms of biological role, catalyzes the phosphorylation of the 3'-hydroxyl group of dephosphocoenzyme A to form coenzyme A. This Oryza sativa subsp. japonica (Rice) protein is Dephospho-CoA kinase.